The primary structure comprises 120 residues: Seripauperin-10 (120 aa).

Residues 1-20 form the signal peptide; the sequence is MVKLTSIAAGVAAIAATASA.

The protein belongs to the SRP1/TIP1 family. Seripauperin subfamily.

The protein is Seripauperin-10 (PAU10) of Saccharomyces cerevisiae (strain ATCC 204508 / S288c) (Baker's yeast).